Here is a 185-residue protein sequence, read N- to C-terminus: ATP synthase subunit b (185 aa).

A helical membrane pass occupies residues 28–48 (VVLVGFAVLMYIVVKFVVPMF).

The protein belongs to the ATPase B chain family. In terms of assembly, F-type ATPases have 2 components, F(1) - the catalytic core - and F(0) - the membrane proton channel. F(1) has five subunits: alpha(3), beta(3), gamma(1), delta(1), epsilon(1). F(0) has three main subunits: a(1), b(2) and c(10-14). The alpha and beta chains form an alternating ring which encloses part of the gamma chain. F(1) is attached to F(0) by a central stalk formed by the gamma and epsilon chains, while a peripheral stalk is formed by the delta and b chains.

Its subcellular location is the cell membrane. In terms of biological role, f(1)F(0) ATP synthase produces ATP from ADP in the presence of a proton or sodium gradient. F-type ATPases consist of two structural domains, F(1) containing the extramembraneous catalytic core and F(0) containing the membrane proton channel, linked together by a central stalk and a peripheral stalk. During catalysis, ATP synthesis in the catalytic domain of F(1) is coupled via a rotary mechanism of the central stalk subunits to proton translocation. Functionally, component of the F(0) channel, it forms part of the peripheral stalk, linking F(1) to F(0). The protein is ATP synthase subunit b of Paenarthrobacter aurescens (strain TC1).